The following is a 190-amino-acid chain: uncharacterized protein (190 aa).

Residues 12 to 34 (LLGLSIFLTTFLFVANFLPGIFA) traverse the membrane as a helical segment.

The protein localises to the membrane. This is an uncharacterized protein from Archaeoglobus fulgidus (strain ATCC 49558 / DSM 4304 / JCM 9628 / NBRC 100126 / VC-16).